The primary structure comprises 353 residues: UPF0283 membrane protein YcjF (353 aa).

Helical transmembrane passes span 70-90 (MVMG…VQWT), 100-120 (VALG…GSVV), and 213-233 (ESTL…FIAW).

The protein belongs to the UPF0283 family.

It localises to the cell inner membrane. This Escherichia coli O139:H28 (strain E24377A / ETEC) protein is UPF0283 membrane protein YcjF.